Reading from the N-terminus, the 265-residue chain is Small ribosomal subunit protein uS3 (265 aa).

In terms of domain architecture, KH type-2 spans 39–107; the sequence is VREFLKKKLK…PVHVNIEEIR (69 aa). Residues 211-265 form a disordered region; the sequence is NDAPVVEEPQEDRRRRPGRPEGRRREGEGRPAGNRRGGAGAGRRAAPGADAKSGE. Positions 221–239 are enriched in basic and acidic residues; the sequence is EDRRRRPGRPEGRRREGEG.

Belongs to the universal ribosomal protein uS3 family. In terms of assembly, part of the 30S ribosomal subunit. Forms a tight complex with proteins S10 and S14.

Its function is as follows. Binds the lower part of the 30S subunit head. Binds mRNA in the 70S ribosome, positioning it for translation. This Cupriavidus metallidurans (strain ATCC 43123 / DSM 2839 / NBRC 102507 / CH34) (Ralstonia metallidurans) protein is Small ribosomal subunit protein uS3.